We begin with the raw amino-acid sequence, 123 residues long: Protein crumbs homolog 3 (123 aa).

Positions 1 to 26 (MASPGLGLLLALGLPLLPARWGRAWG) are cleaved as a signal peptide. The Extracellular segment spans residues 27–59 (QTLDPHVNENGTITPSAPGSGSNGALSQEAITA). Asn-36 carries N-linked (GlcNAc...) asparagine glycosylation. Residues 60–80 (IIVVFSLLAAVLLAVGLVLLL) traverse the membrane as a helical segment. The Cytoplasmic segment spans residues 81–120 (RKLREKRQTQGTYRPSSEEQFNHAAEARAPQDSKETVRGC). The disordered stretch occupies residues 87-123 (RQTQGTYRPSSEEQFNHAAEARAPQDSKETVRGCLPI). Basic and acidic residues predominate over residues 96–117 (SSEEQFNHAAEARAPQDSKETV). The short motif at 119–123 (GCLPI) is the PDZ-binding element.

As to quaternary structure, component of a complex composed of CRB3, PALS1 and PATJ. Interacts (via C-terminus) with PALS1 (via PDZ domain). Interacts with PARD6A. Interacts (via intracellular domain) with EPB41L5. Interacts with WDR83.

It localises to the apical cell membrane. Its subcellular location is the cell junction. The protein localises to the tight junction. Functionally, involved in the establishment of cell polarity in mammalian epithelial cells. Regulates the morphogenesis of tight junctions. Involved in promoting phosphorylation and cytoplasmic retention of transcriptional coactivators YAP1 and WWTR1/TAZ which leads to suppression of TGFB1-dependent transcription of target genes such as CCN2/CTGF, SERPINE1/PAI1, SNAI1/SNAIL1 and SMAD7. In Canis lupus familiaris (Dog), this protein is Protein crumbs homolog 3.